A 460-amino-acid chain; its full sequence is CCA-adding enzyme (460 aa).

Ser-50 and Arg-53 together coordinate ATP. 2 residues coordinate CTP: Ser-50 and Arg-53. Residues Asp-62, Asp-64, and Asp-117 each contribute to the Mg(2+) site. Residues His-140, Lys-159, and Tyr-168 each contribute to the ATP site. His-140, Lys-159, and Tyr-168 together coordinate CTP.

It belongs to the tRNA nucleotidyltransferase/poly(A) polymerase family. Archaeal CCA-adding enzyme subfamily. In terms of assembly, homodimer. It depends on Mg(2+) as a cofactor.

The catalysed reaction is a tRNA precursor + 2 CTP + ATP = a tRNA with a 3' CCA end + 3 diphosphate. It catalyses the reaction a tRNA with a 3' CCA end + 2 CTP + ATP = a tRNA with a 3' CCACCA end + 3 diphosphate. Its function is as follows. Catalyzes the addition and repair of the essential 3'-terminal CCA sequence in tRNAs without using a nucleic acid template. Adds these three nucleotides in the order of C, C, and A to the tRNA nucleotide-73, using CTP and ATP as substrates and producing inorganic pyrophosphate. tRNA 3'-terminal CCA addition is required both for tRNA processing and repair. Also involved in tRNA surveillance by mediating tandem CCA addition to generate a CCACCA at the 3' terminus of unstable tRNAs. While stable tRNAs receive only 3'-terminal CCA, unstable tRNAs are marked with CCACCA and rapidly degraded. In Methanoregula boonei (strain DSM 21154 / JCM 14090 / 6A8), this protein is CCA-adding enzyme.